The chain runs to 180 residues: Pituitary tumor-transforming gene 1 protein-interacting protein (180 aa).

The signal sequence occupies residues 1–32 (MAPGVARGPTPYWRLRLGGAALLLLLIPVAAA). Over 33–96 (QEPPGAACSQ…RWGVCWVNFE (64 aa)) the chain is Extracellular. Residues 39–92 (ACSQNTNKTCEECLKNVSCLWCNTNKACLDYPVTSVLPPASLCKLSSARWGVCW) enclose the PSI domain. 2 N-linked (GlcNAc...) asparagine glycosylation sites follow: Asn45 and Asn54. A helical membrane pass occupies residues 97-117 (ALIITMSVVGGTLLLGIAICC). Over 118–180 (CCCCRRKRSR…ENPYARFENN (63 aa)) the chain is Cytoplasmic. A coiled-coil region spans residues 130–165 (DRSEEKAMREREERRIRQEERRAEMKTRHDEIRKKY). A disordered region spans residues 131-157 (RSEEKAMREREERRIRQEERRAEMKTR). Residue Tyr174 is modified to Phosphotyrosine.

In terms of assembly, interacts with PTTG1. In terms of tissue distribution, ubiquitous.

It localises to the membrane. The protein localises to the cytoplasm. It is found in the nucleus. Its function is as follows. May facilitate PTTG1 nuclear translocation. The polypeptide is Pituitary tumor-transforming gene 1 protein-interacting protein (PTTG1IP) (Homo sapiens (Human)).